The sequence spans 309 residues: Small ribosomal subunit protein uS7m (309 aa).

The disordered stretch occupies residues 39-86; the sequence is DSTTSSRLPPRVQIQQQQQQRTQPYSTETTPPPNSNNGDLAGIEGQPP. The span at 51–61 shows a compositional bias: low complexity; sequence QIQQQQQQRTQ.

It belongs to the universal ribosomal protein uS7 family. As to quaternary structure, component of the mitochondrial small ribosomal subunit (mt-SSU). Mature N.crassa 74S mitochondrial ribosomes consist of a small (37S) and a large (54S) subunit. The 37S small subunit contains a 16S ribosomal RNA (16S mt-rRNA) and 32 different proteins. The 54S large subunit contains a 23S rRNA (23S mt-rRNA) and 42 different proteins.

The protein resides in the mitochondrion. Component of the mitochondrial ribosome (mitoribosome), a dedicated translation machinery responsible for the synthesis of mitochondrial genome-encoded proteins, including at least some of the essential transmembrane subunits of the mitochondrial respiratory chain. The mitoribosomes are attached to the mitochondrial inner membrane and translation products are cotranslationally integrated into the membrane. This is Small ribosomal subunit protein uS7m (rsm7) from Neurospora crassa (strain ATCC 24698 / 74-OR23-1A / CBS 708.71 / DSM 1257 / FGSC 987).